Consider the following 116-residue polypeptide: PTS system galactose-specific EIIA component (116 aa).

A PTS EIIA type-3 domain is found at 11–109 (DDYMGVVMGI…AVEVVGQERR (99 aa)). The Tele-phosphohistidine intermediate role is filled by His-85. His-85 carries the post-translational modification Phosphohistidine; by HPr. Asp-88 is a Mg(2+) binding site.

Homotrimer. Mg(2+) is required as a cofactor.

Its function is as follows. The phosphoenolpyruvate-dependent sugar phosphotransferase system (sugar PTS), a major carbohydrate active transport system, catalyzes the phosphorylation of incoming sugar substrates concomitantly with their translocation across the cell membrane. Involved in galactose transport with PtcB and Lmg_0963. This chain is PTS system galactose-specific EIIA component, found in Lactococcus lactis subsp. cremoris (strain MG1363).